A 181-amino-acid polypeptide reads, in one-letter code: uncharacterized protein (181 aa).

The Cytoplasmic portion of the chain corresponds to 1 to 14 (MQKCIMRSTEFKTH). A helical transmembrane segment spans residues 15-35 (FSFHSIFSFPLSAALLALISA). The Extracellular portion of the chain corresponds to 36-58 (SEPASKAFINVQFISSPLVKKEV). A helical membrane pass occupies residues 59-79 (LPFIVSFHSLSSNGILSFSPF). At 80 to 84 (TSSNL) the chain is on the cytoplasmic side. A helical membrane pass occupies residues 85-105 (SIAQLPFLIKVPLLSMGSLAL). Residues 106 to 116 (ENFNKFIPRAD) lie on the Extracellular side of the membrane. Residues 117-137 (LVAAWVTIIMVFTFGNFLSTL) traverse the membrane as a helical segment. Over 138–153 (SIKTGQNLWHLSKISS) the chain is Cytoplasmic. Residues 154 to 174 (SVSPLLLGIILGSQSGEIMLG) form a helical membrane-spanning segment. The Extracellular segment spans residues 175 to 181 (KNLLITS).

It localises to the membrane. This is an uncharacterized protein from Saccharomyces cerevisiae (strain ATCC 204508 / S288c) (Baker's yeast).